A 193-amino-acid chain; its full sequence is dCTP deaminase (193 aa).

DCTP is bound by residues 110–115 (RSSLAR), Asp128, 136–138 (VLE), Tyr171, Lys178, and Gln182. Catalysis depends on Glu138, which acts as the Proton donor/acceptor.

It belongs to the dCTP deaminase family. Homotrimer.

The catalysed reaction is dCTP + H2O + H(+) = dUTP + NH4(+). The protein operates within pyrimidine metabolism; dUMP biosynthesis; dUMP from dCTP (dUTP route): step 1/2. Catalyzes the deamination of dCTP to dUTP. In Buchnera aphidicola subsp. Schizaphis graminum (strain Sg), this protein is dCTP deaminase.